We begin with the raw amino-acid sequence, 61 residues long: Sec-independent protein translocase protein TatA (61 aa).

Residues 2-22 (GLSGISPLSLLLILAIIVALF) traverse the membrane as a helical segment.

It belongs to the TatA/E family. The Tat system comprises two distinct complexes: a TatABC complex, containing multiple copies of TatA, TatB and TatC subunits, and a separate TatA complex, containing only TatA subunits. Substrates initially bind to the TatABC complex, which probably triggers association of the separate TatA complex to form the active translocon.

The protein localises to the cell inner membrane. Part of the twin-arginine translocation (Tat) system that transports large folded proteins containing a characteristic twin-arginine motif in their signal peptide across membranes. TatA could form the protein-conducting channel of the Tat system. The sequence is that of Sec-independent protein translocase protein TatA from Legionella pneumophila (strain Corby).